We begin with the raw amino-acid sequence, 282 residues long: ATP phosphoribosyltransferase (282 aa).

It belongs to the ATP phosphoribosyltransferase family. Long subfamily. It depends on Mg(2+) as a cofactor.

The protein localises to the cytoplasm. It carries out the reaction 1-(5-phospho-beta-D-ribosyl)-ATP + diphosphate = 5-phospho-alpha-D-ribose 1-diphosphate + ATP. The protein operates within amino-acid biosynthesis; L-histidine biosynthesis; L-histidine from 5-phospho-alpha-D-ribose 1-diphosphate: step 1/9. Feedback inhibited by histidine. Catalyzes the condensation of ATP and 5-phosphoribose 1-diphosphate to form N'-(5'-phosphoribosyl)-ATP (PR-ATP). Has a crucial role in the pathway because the rate of histidine biosynthesis seems to be controlled primarily by regulation of HisG enzymatic activity. The chain is ATP phosphoribosyltransferase from Halobacterium salinarum (strain ATCC 29341 / DSM 671 / R1).